Reading from the N-terminus, the 117-residue chain is MTRVKSGKISKNRHKKILKLAKGYRGRANSCFRVAIEKVEKALQYAYRDRRNRKRDFRGLWIQRINAAVREHELVYSQFMGALKKAGIDINRKVLAELAVNNSDGFVSIVEKAKAHI.

Belongs to the bacterial ribosomal protein bL20 family.

Its function is as follows. Binds directly to 23S ribosomal RNA and is necessary for the in vitro assembly process of the 50S ribosomal subunit. It is not involved in the protein synthesizing functions of that subunit. This Rickettsia massiliae (strain Mtu5) protein is Large ribosomal subunit protein bL20.